We begin with the raw amino-acid sequence, 475 residues long: ATP synthase subunit beta (475 aa).

Position 160-167 (160-167 (GGAGVGKT)) interacts with ATP.

Belongs to the ATPase alpha/beta chains family. In terms of assembly, F-type ATPases have 2 components, CF(1) - the catalytic core - and CF(0) - the membrane proton channel. CF(1) has five subunits: alpha(3), beta(3), gamma(1), delta(1), epsilon(1). CF(0) has three main subunits: a(1), b(2) and c(9-12). The alpha and beta chains form an alternating ring which encloses part of the gamma chain. CF(1) is attached to CF(0) by a central stalk formed by the gamma and epsilon chains, while a peripheral stalk is formed by the delta and b chains.

The protein localises to the cell membrane. The enzyme catalyses ATP + H2O + 4 H(+)(in) = ADP + phosphate + 5 H(+)(out). Functionally, produces ATP from ADP in the presence of a proton gradient across the membrane. The catalytic sites are hosted primarily by the beta subunits. This Mycolicibacterium vanbaalenii (strain DSM 7251 / JCM 13017 / BCRC 16820 / KCTC 9966 / NRRL B-24157 / PYR-1) (Mycobacterium vanbaalenii) protein is ATP synthase subunit beta.